Consider the following 156-residue polypeptide: Small ribosomal subunit protein uS7 (156 aa).

The protein belongs to the universal ribosomal protein uS7 family. As to quaternary structure, part of the 30S ribosomal subunit. Contacts proteins S9 and S11.

One of the primary rRNA binding proteins, it binds directly to 16S rRNA where it nucleates assembly of the head domain of the 30S subunit. Is located at the subunit interface close to the decoding center, probably blocks exit of the E-site tRNA. This Prochlorococcus marinus (strain MIT 9303) protein is Small ribosomal subunit protein uS7.